We begin with the raw amino-acid sequence, 323 residues long: ATP synthase gamma chain (323 aa).

Belongs to the ATPase gamma chain family. In terms of assembly, F-type ATPases have 2 components, CF(1) - the catalytic core - and CF(0) - the membrane proton channel. CF(1) has five subunits: alpha(3), beta(3), gamma(1), delta(1), epsilon(1). CF(0) has three main subunits: a, b and c.

Its subcellular location is the cell inner membrane. In terms of biological role, produces ATP from ADP in the presence of a proton gradient across the membrane. The gamma chain is believed to be important in regulating ATPase activity and the flow of protons through the CF(0) complex. The sequence is that of ATP synthase gamma chain from Rickettsia rickettsii (strain Iowa).